Here is a 2568-residue protein sequence, read N- to C-terminus: MQSAGMHRATAEPIAIVGLSCKFAGEASTPDRLWEMLAAGRSAWSEIPPSRFNLKGAYHPSADRTNTVCFNSLCRGNPTEEKKVHVRGGHFLEQDLGLFDAQFFSFSAETAASMDPQIRLQLESVYEALENAGITLPDVAGSNTAVYAAVFSRDYRDGIIRDEDRLPRFLPTGTGDAMFSNRVSHFFDLRGPSITLDTGCSGGLVALHEGVKSLRTGESDMALISGEGLTDEGRFFSPDGKSYAFDSRANGYGRGEGIATIVIKRLSDAIIAGDPIRAIVRESGLNQDGKTETITTPSEEAQVALMRDCYRRAGLDYADTQYLEAHGTGTSTGDPIECRAIATVFKDSRSSEQPLRIGSVKTNVGHTEAASGLASLIKVVMALEKGKIPPSINFEKPNPKIALDEWNLRVVTTLEDWPAGPGGVRRASINNFGFGGTNAHLIVESQAAQPLPWQADGYGASATNLDSQIFVFSARDKQACVNMVNNLKKYLRQNAATDSPDFLLQRVAYTLGQRRTRFPWVTARPVPVQNGFREAIQALEVNMPVPRRTTGIPRIGMVFTGQGAQWYAMGRELIAAYPVFKASLKETDRHLAALGARWSVIEELNQDIPASRVHDVEYSTPLCVAVQISLVRLLRSWGVKPVAVTSHSSGEIAAAYAVGALGCQDAMAVAYHRALLATRSSLGSKQGAMLVVGMSLEETETYLARIDAQIGIATVACVNSPSSITVSGDQDAVNALEALARNDGIFTHRLKIHTAFHSHHMNPIADLYRSALQGALSPNHDKVESDITFSSPVTGRRITNLSQLSEPDHWVDSLLKPVQFVDAFTDMVLGASGASSANVDLILEVGPHTALGAPIKQILAEPKFAGLDISCLGSLVREVSAVRSMHSLAASLVAEGLPLDLDAVNFPHGRPPSVRALSDLPSYPWNHQTRHWYESRFNKGLRERAQPPHDLLGSLVLGTDPNSPTWRHILKLKDAPWLREHVVQEDILFPGAGFICLAIEAIKMLPELQSKAPQAAAGYRLRDVDLLQGLVIPDNDDGVEIQTSLSEVSDKEMGNRGWKRFEVSSVSADNQWSTHARGLITMEPEDAPDKTITKSRPADLSGYTRRFGPSDLYDMMRERGIYHGPAFQIITDIEQAGNNQRADSSLFIPDTAIPADSPYQTLIHPITLDAAFQTVYAPLLGGKEWDDAIVPRTLGSLWISNSISQAAGHRFKAFAILHHSDARTMRSDIYMADNNSDASPVLMVRNAVFQSVGRSAAPQQVKAQWESEPCTNVVWGPDMSLLSTPMRAQLKQQLSHPPEAEEARLLADLRRACLYFIYDALSSLRPFELRKLPSHHAKYHSWMQVQVSLAAECRLAEDSARWSSDTQEQRQSLIERVGRSSVNGEMVCKLGPHLAAIIRQEKMPLELMMENNMLNHYYQNALKCDRILSQAAHILQNLIHKNPRARILEIGAGTGSFTRYALPKIGTAATGGPLAELYHFTDISPAFFEAAREEFAAWDDIMVFEKLDIEQDPASQGYDMESYDIVVAVQVLHATTSMSKTMSHVRKLMKPGGHLLLVETTHDQLDTEFAFGLLPGWWLSEEPQRALSPSMSVPLWDETLKAAALSGVDFEVRDCESDEWYMMSVITSTAVPAHQLTLNPDSIVFVERKDAPCRQRWLEILRSNFAAAGQSPPVVEFETATAESYKGKWTVFLGEVDKPLLYDLDATGLKNIQTMIKHSRSLLWVTRGGAVKCERPELSLATGFLRSIRHEYAGRRFVTFDLDPHESLWSDTSTADIAKVMTTSFGSAADNAQTPPPYDFEYAVREGVILVPRLFRDSARNQAINPASVCWASPEALPTESFFQSNRTLALKVGVPGLLDTIAFDDDPAALADCTQLPPDLVEIKPRAYGVNFRDVLVAMGQLEERVMGVDCAGVITRVGCQAAAHGYAPGDNVFALVRSGYSSRPRVEWTNAMHIPQGLSFEQAASVPAIFTTVYLCFYKIARLQRGQTVLIHAGAGGVGQTAIQFARHIGAEVYTTVGSAEKRELLIQRYGIPADHIFSSRDASFADGILEATNGRGVDVVLNSLAGPLLQASLNILAPFGHFVEVGKRDIEQNSHLEMRPFSRHITFSSFDLLALSQHDKRSIHSSLIEIRRLLEEGAISPVYPVSTYPLGDIGKVFRLLQVGKHSGKVVLSISPDEQVRVVPQARTAKLRSDASYLLVGGAGGIGRSMAHWLAAHGAKNIIVLSRSAGTSPAVAELVAELQPLGCHVKPISCDASVKADLAAALSSCSAELPPIRGVIQAAMVLQDSVLERMTFEDWQTSLNPKVRASWNVHTQLRDADLDFFVFLSSMSGIYGYTTQSNYSAGNTYEDALAHWRVSQGLPAVSMDLGPVKSVGYVAGVAGVADRMTKLGHFPVTEEQVLRVLETAVLSPFDKQVAMGINQGPGSHWHPVGPSPLGRDARFRSLQYQKSTQRQATNGYSNASTSLASRLSDAKTRQQAEKLVVEAIASKLADIFMIPVAHVDAAKHLSEYGLDSLSAVELRNMLALQAAADVSIFSIMQSESLAALASEVTRKSTHVPASLSVM.

The Ketosynthase family 3 (KS3) domain maps to 11-445; it reads AEPIAIVGLS…GTNAHLIVES (435 aa). Residues Cys200, His326, and His366 each act as for beta-ketoacyl synthase activity in the active site. A Malonyl-CoA:ACP transacylase (MAT) domain is found at 558 to 882; it reads VFTGQGAQWY…GSLVREVSAV (325 aa). The segment at 949–1087 is N-terminal hotdog fold; sequence HDLLGSLVLG…GLITMEPEDA (139 aa). The region spanning 949–1258 is the PKS/mFAS DH domain; it reads HDLLGSLVLG…FQSVGRSAAP (310 aa). The Proton acceptor; for dehydratase activity role is filled by His981. The C-terminal hotdog fold stretch occupies residues 1104–1258; that stretch reads TRRFGPSDLY…FQSVGRSAAP (155 aa). Asp1169 serves as the catalytic Proton donor; for dehydratase activity. The segment at 1311–1620 is methyltransferase (CMet) domain; the sequence is RACLYFIYDA…EVRDCESDEW (310 aa). Positions 1857 to 2174 constitute an Enoyl reductase (ER) domain; sequence GLLDTIAFDD…VGKHSGKVVL (318 aa). Residues 2197 to 2375 form the Ketoreductase (KR) domain; sequence ASYLLVGGAG…AVSMDLGPVK (179 aa). One can recognise a Carrier domain in the interval 2481 to 2558; that stretch reads QAEKLVVEAI…ALASEVTRKS (78 aa). At Ser2518 the chain carries O-(pantetheine 4'-phosphoryl)serine.

Pantetheine 4'-phosphate is required as a cofactor.

It participates in secondary metabolite biosynthesis. Its function is as follows. Highly reducing polyketide synthase; part of a cluster that mediates the biosynthesis of a yet undetermined secondary metabolite. With esterase AN6793, produces a pathway intermediate compound with molecular weight 258. The protein is Highly reducing polyketide synthase AN6791 of Emericella nidulans (strain FGSC A4 / ATCC 38163 / CBS 112.46 / NRRL 194 / M139) (Aspergillus nidulans).